The chain runs to 444 residues: Retinoic acid receptor alpha-A (444 aa).

A modulating region spans residues 1 to 71; that stretch reads MYESVDVNPF…PPSPPPPPRI (71 aa). A compositionally biased stretch (polar residues) spans 35–46; sequence SIRHQHWSGSNH. Positions 35–67 are disordered; it reads SIRHQHWSGSNHSIETQSTSSEEIVPSPPSPPP. Over residues 47–58 the composition is skewed to low complexity; that stretch reads SIETQSTSSEEI. The nuclear receptor DNA-binding region spans 72–147; sequence YKPCFVCQDK…VGMSKESVRN (76 aa). 2 NR C4-type zinc fingers span residues 75 to 95 and 111 to 130; these read CFVC…CEGC and CHRE…CQYC. Residues 148-169 are hinge; the sequence is DRNKKKKEEKKPECTENYTLSP. Residues 170–404 enclose the NR LBD domain; sequence DTEQMIDRVR…PLIQEMLENS (235 aa). A 9aaTAD motif is present at residues 395 to 403; the sequence is PLIQEMLEN. The disordered stretch occupies residues 402 to 444; that stretch reads ENSEGLESSSGAQGSRASATTPGSCSPSLSPNSAQSSPPTQSP.

This sequence belongs to the nuclear hormone receptor family. NR1 subfamily. Heterodimer; with an rxr molecule. Binds DNA preferentially as a rar/rxr heterodimer. In the embryo, zygotic expression largely overlaps that of rarab, with high levels in hindbrain, lateral mesoderm and tail bud. In the adult, strong expression in brain and muscle, weaker expression in ovary, liver and digestive tract.

The protein resides in the nucleus. In terms of biological role, receptor for retinoic acid. Retinoic acid receptors bind as heterodimers to their target response elements in response to their ligands, all-trans or 9-cis retinoic acid, and regulate gene expression in various biological processes. The rar/rxr heterodimers bind to the retinoic acid response elements (RARE) composed of tandem 5'-AGGTCA-3' sites known as DR1-DR5. Required for hindbrain patterning. The sequence is that of Retinoic acid receptor alpha-A from Danio rerio (Zebrafish).